Here is a 130-residue protein sequence, read N- to C-terminus: Large ribosomal subunit protein bL19 (130 aa).

Belongs to the bacterial ribosomal protein bL19 family.

This protein is located at the 30S-50S ribosomal subunit interface and may play a role in the structure and function of the aminoacyl-tRNA binding site. This is Large ribosomal subunit protein bL19 from Cupriavidus metallidurans (strain ATCC 43123 / DSM 2839 / NBRC 102507 / CH34) (Ralstonia metallidurans).